A 470-amino-acid chain; its full sequence is Cell division protein FtsA (470 aa).

The tract at residues 416-470 (NKKDTHENEVESTDEEIYQSEDNHQEHKQNHEHVQDKDKDKEESKFKKLMKSLFE) is disordered. Positions 425-434 (VESTDEEIYQ) are enriched in acidic residues. A compositionally biased stretch (basic and acidic residues) spans 436–461 (EDNHQEHKQNHEHVQDKDKDKEESKF).

Belongs to the FtsA/MreB family. As to quaternary structure, self-interacts. Interacts with FtsZ.

The protein resides in the cell membrane. Cell division protein that is involved in the assembly of the Z ring. May serve as a membrane anchor for the Z ring. The polypeptide is Cell division protein FtsA (Staphylococcus aureus (strain NCTC 8325 / PS 47)).